We begin with the raw amino-acid sequence, 457 residues long: tRNA modification GTPase MnmE (457 aa).

The (6S)-5-formyl-5,6,7,8-tetrahydrofolate site is built by R25, E87, and R126. In terms of domain architecture, TrmE-type G spans 223 to 377; sequence GISTAIIGRP…IEERINNLFF (155 aa). N233 is a K(+) binding site. GTP-binding positions include 233–238, 252–258, and 277–280; these read NVGKSS, TDIAGTT, and DTAG. S237 serves as a coordination point for Mg(2+). The K(+) site is built by T252, I254, and T257. Position 258 (T258) interacts with Mg(2+). K457 contributes to the (6S)-5-formyl-5,6,7,8-tetrahydrofolate binding site.

It belongs to the TRAFAC class TrmE-Era-EngA-EngB-Septin-like GTPase superfamily. TrmE GTPase family. As to quaternary structure, homodimer. Heterotetramer of two MnmE and two MnmG subunits. Requires K(+) as cofactor.

The protein localises to the cytoplasm. Functionally, exhibits a very high intrinsic GTPase hydrolysis rate. Involved in the addition of a carboxymethylaminomethyl (cmnm) group at the wobble position (U34) of certain tRNAs, forming tRNA-cmnm(5)s(2)U34. The polypeptide is tRNA modification GTPase MnmE (Streptococcus pneumoniae serotype 4 (strain ATCC BAA-334 / TIGR4)).